A 213-amino-acid chain; its full sequence is von Hippel-Lindau disease tumor suppressor (213 aa).

The disordered stretch occupies residues 1–65 (MPRRAENWDE…AGRPRPVLRS (65 aa)). Residues 8 to 54 (WDEAEVGAEEAGVEEYGPEEDGGEESGAEESGPEESGPEELGAEEEM) show a composition bias toward acidic residues. A run of 8 repeats spans residues 14 to 18 (GAEEA), 19 to 23 (GVEEY), 24 to 28 (GPEED), 29 to 33 (GGEES), 34 to 38 (GAEES), 39 to 43 (GPEES), 44 to 48 (GPEEL), and 49 to 53 (GAEEE). Residues 14–53 (GAEEAGVEEYGPEEDGGEESGAEESGPEESGPEELGAEEE) are 8 X 5 AA tandem repeats of G-[PAVG]-E-E-[DAYSLE]. Positions 100 to 155 (TLPPGTGRRIHSYRGHLWLFRDAGTHDGLLVNQTELFVPSLNVDGQPIFANITLPV) are involved in binding to CCT complex. Residues 157 to 166 (TLKERCLQVV) form an interaction with Elongin BC complex region.

It belongs to the VHL family. Component of the VCB (VHL-Elongin BC-CUL2) complex; this complex acts as a ubiquitin-ligase E3 and directs proteasome-dependent degradation of targeted proteins. Interacts with CUL2; this interaction is dependent on the integrity of the trimeric VCB complex. Interacts (via the beta domain) with HIF1A (via the NTAD domain); this interaction mediates degradation of HIF1A in normoxia and, in hypoxia, prevents ubiquitination and degradation of HIF1A by mediating hypoxia-induced translocation to the nucleus, a process which requires a hypoxia-dependent regulatory signal. Interacts with ADRB2; the interaction, in normoxia, is dependent on hydroxylation of ADRB2 and the subsequent VCB-mediated ubiquitination and degradation of ADRB2. Under hypoxia, hydroxylation, interaction with VHL, ubiquitination and subsequent degradation of ADRB2 are dramatically decreased. Interacts with RNF139, USP33 and JADE1. Found in a complex composed of LIMD1, VHL, EGLN1/PHD2, ELOB and CUL2. Isoform 1 and isoform 3 interact with LIMD1 (via LIM zinc-binding 2), AJUBA (via LIM domains) and WTIP (via LIM domains). Interacts with EPAS1. Interacts with CARD9. Interacts with DCUN1D1 independently of CUL2; this interaction engages DCUN1D1 in the VCB complex and triggers CUL2 neddylation and consequently cullin ring ligase (CRL) substrates polyubiquitylation. Interacts with ALAS1 (hydroxylated form). Interacts with IGFBP1. In terms of tissue distribution, expressed in the adult and fetal brain and kidney.

Its subcellular location is the cytoplasm. The protein resides in the cell membrane. It is found in the endoplasmic reticulum. The protein localises to the nucleus. It functions in the pathway protein modification; protein ubiquitination. In terms of biological role, involved in the ubiquitination and subsequent proteasomal degradation via the von Hippel-Lindau ubiquitination complex. Seems to act as a target recruitment subunit in the E3 ubiquitin ligase complex and recruits hydroxylated hypoxia-inducible factor (HIF) under normoxic conditions. Involved in transcriptional repression through interaction with HIF1A, HIF1AN and histone deacetylases. Ubiquitinates, in an oxygen-responsive manner, ADRB2. Acts as a negative regulator of mTORC1 by promoting ubiquitination and degradation of RPTOR. The polypeptide is von Hippel-Lindau disease tumor suppressor (VHL) (Homo sapiens (Human)).